The primary structure comprises 72 residues: MNNKEFNMEQFKKLAAVVSEDELDEMLDENVTGAASSIPCAKVVVKVTTVVVAATTGFDWCPTGACTTSCRF.

A propeptide spans 1-34 (MNNKEFNMEQFKKLAAVVSEDELDEMLDENVTGA) (cleaved by FlvT). Positions 36–40 (SSIPC) form a cross-link, lanthionine (Ser-Cys); by FlvM2. At serine 37 the chain carries 2,3-didehydroalanine (Ser); by FlvM2. A 2,3-didehydrobutyrine; by FlvM2 mark is found at threonine 48 and threonine 49. Cross-links (beta-methyllanthionine (Thr-Cys); by FlvM2) lie at residues 55-61 (TTGFDWC), 63-66 (TGAC), and 67-70 (TTSC).

Post-translationally, contains LL-lanthionine and DL-beta-methyllanthionine, when coepressed in E.coli with the flavecin synthetase FlvM2.

It localises to the secreted. Lanthionine-containing peptide antibiotic (lantibiotic) that is probably active on Gram-positive bacteria, since its analog [Del1]Flvbeta.e shows antibacterial activity against Gram-positive bacteria. This activity is not synergistically enhanced by [Del2]Flvalpha.a, an analog of Flvalpha.a, which is encoded by the same operon than Flvbeta.e. The bactericidal activity of lantibiotics is based on depolarization of energized bacterial cytoplasmic membranes, initiated by the formation of aqueous transmembrane pores. This is Lantibiotic Flvbeta.e from Ruminococcus flavefaciens.